Reading from the N-terminus, the 100-residue chain is Ubiquitin-related modifier 1 homolog (100 aa).

At G100 the chain carries 1-thioglycine. A Glycyl lysine isopeptide (Gly-Lys) (interchain with K-? in acceptor proteins) cross-link involves residue G100.

The protein belongs to the URM1 family. In terms of processing, C-terminal thiocarboxylation occurs in 2 steps, it is first acyl-adenylated (-COAMP) via the hesA/moeB/thiF part of the MOCS3 homolog, then thiocarboxylated (-COSH) via the rhodanese domain of the MOCS3 homolog.

It localises to the cytoplasm. Its pathway is tRNA modification; 5-methoxycarbonylmethyl-2-thiouridine-tRNA biosynthesis. Its function is as follows. Acts as a sulfur carrier required for 2-thiolation of mcm(5)S(2)U at tRNA wobble positions of cytosolic tRNA(Lys), tRNA(Glu) and tRNA(Gln). Serves as sulfur donor in tRNA 2-thiolation reaction by being thiocarboxylated (-COSH) at its C-terminus by MOCS3. The sulfur is then transferred to tRNA to form 2-thiolation of mcm(5)S(2)U. Also acts as a ubiquitin-like protein (UBL) that is covalently conjugated via an isopeptide bond to lysine residues of target proteins. The thiocarboxylated form serves as substrate for conjugation and oxidative stress specifically induces the formation of UBL-protein conjugates. The chain is Ubiquitin-related modifier 1 homolog from Oryza sativa subsp. japonica (Rice).